The following is a 228-amino-acid chain: Histone H1-III (228 aa).

Residues 1–18 (MSDPAPEVASAVPVASPA) show a composition bias toward low complexity. 2 disordered regions span residues 1–44 (MSDP…PPVS) and 98–228 (LQTK…AKKA). The H15 domain occupies 39–113 (THPPVSEMVV…GASGSFKLPA (75 aa)). Positions 115-133 (AKKEKVAKTPKKAAGEKKP) are enriched in basic and acidic residues. 2 stretches are compositionally biased toward basic residues: residues 148–170 (SIAK…KSTK) and 178–209 (AAKK…KVAA). The span at 211 to 221 (KPAEKKPEAAK) shows a compositional bias: basic and acidic residues.

This sequence belongs to the histone H1/H5 family.

Its subcellular location is the nucleus. The protein localises to the chromosome. Histones H1 are necessary for the condensation of nucleosome chains into higher-order structures. The polypeptide is Histone H1-III (Glyptotendipes barbipes (Midge)).